The primary structure comprises 561 residues: Putative transport protein AHA_2450 (561 aa).

Transmembrane regions (helical) follow at residues 8–28, 37–57, 66–86, 90–110, and 161–181; these read LLHQ…LLLG, IGNT…GFEF, FMLF…SVFL, IHYI…TVGL, and NMGI…MLVV. 2 RCK C-terminal domains span residues 206-291 and 293-376; these read SDNE…NYRN and KEVF…KIGF. A run of 5 helical transmembrane segments spans residues 386–406, 409–429, 450–470, 476–496, and 541–561; these read LVAF…SLVF, LEFG…MGYL, LGLA…ILDH, AVVL…GYLF, and TYAV…GFWF.

Belongs to the AAE transporter (TC 2.A.81) family. YbjL subfamily.

It localises to the cell membrane. In Aeromonas hydrophila subsp. hydrophila (strain ATCC 7966 / DSM 30187 / BCRC 13018 / CCUG 14551 / JCM 1027 / KCTC 2358 / NCIMB 9240 / NCTC 8049), this protein is Putative transport protein AHA_2450.